We begin with the raw amino-acid sequence, 116 residues long: Ig heavy chain V region 3-6 (116 aa).

The N-terminal stretch at 1 to 18 (MKVLSLLYLLTAIPGILS) is a signal peptide. Positions 19-48 (DVQLQESGPGLVKPSQSLSLTCSVTGYSIT) are framework-1. Cysteine 40 and cysteine 114 are joined by a disulfide. Residues 49 to 53 (SGYYW) form a complementarity-determining-1 region. The segment at 54-67 (NWIRQFPGNKLEWM) is framework-2. Positions 68-84 (GYISYDGSNNYNPSLKN) are complementarity-determining-2. The framework-3 stretch occupies residues 85–116 (RISITRDTSKNQFFLKLNSVTTEDTATYYCAR).

The protein is Ig heavy chain V region 3-6 (Ighv3-6) of Mus musculus (Mouse).